A 126-amino-acid chain; its full sequence is Fluoride-specific ion channel FluC (126 aa).

3 helical membrane passes run 33 to 53 (LPLN…VFIV), 64 to 84 (YSLF…SFAL), and 96 to 116 (GALA…LIGG). Na(+) contacts are provided by glycine 74 and threonine 77.

This sequence belongs to the fluoride channel Fluc/FEX (TC 1.A.43) family.

It is found in the cell membrane. It catalyses the reaction fluoride(in) = fluoride(out). Its activity is regulated as follows. Na(+) is not transported, but it plays an essential structural role and its presence is essential for fluoride channel function. Functionally, fluoride-specific ion channel. Important for reducing fluoride concentration in the cell, thus reducing its toxicity. This Nitrosopumilus maritimus (strain SCM1) protein is Fluoride-specific ion channel FluC.